Reading from the N-terminus, the 172-residue chain is Adenine phosphoribosyltransferase (172 aa).

The protein belongs to the purine/pyrimidine phosphoribosyltransferase family. In terms of assembly, homodimer.

It is found in the cytoplasm. It carries out the reaction AMP + diphosphate = 5-phospho-alpha-D-ribose 1-diphosphate + adenine. It participates in purine metabolism; AMP biosynthesis via salvage pathway; AMP from adenine: step 1/1. In terms of biological role, catalyzes a salvage reaction resulting in the formation of AMP, that is energically less costly than de novo synthesis. This is Adenine phosphoribosyltransferase from Microcystis aeruginosa (strain NIES-843 / IAM M-2473).